We begin with the raw amino-acid sequence, 306 residues long: MQLKQVIIAYKARDSQSKRWAELCAKQLENRNCQVLMGPSGPKDNPYPVFLASASQPIDLAIVLGGDGTVLTSARHLAPAGIPILGVNVGGHLGFLTESVDEFQDTEKVWDRLFEDRYAIQRRMMLQAAVYEGHRTNLEPVTERYLGLNEFCVKPASADRMITSILEMEIDGEVVDQYVGDGLIISTPTGSTGYTVSASGPIMHDGMEAITITPICPMSLSSRPLILPAGSVVSIWPLGDYDLSTKLWMDGVLATSIWPAHRVDIRMADCRAKFIVLRENNSYYQTLREKLLWAGTRVRYTSTQHN.

The active-site Proton acceptor is the Asp-67. NAD(+) contacts are provided by residues 67 to 68, 149 to 150, Asp-181, and 192 to 197; these read DG, NE, and TGYTVS.

The protein belongs to the NAD kinase family. It depends on a divalent metal cation as a cofactor.

It is found in the cytoplasm. It carries out the reaction NAD(+) + ATP = ADP + NADP(+) + H(+). Functionally, involved in the regulation of the intracellular balance of NAD and NADP, and is a key enzyme in the biosynthesis of NADP. Catalyzes specifically the phosphorylation on 2'-hydroxyl of the adenosine moiety of NAD to yield NADP. The sequence is that of NAD kinase 1 from Trichormus variabilis (strain ATCC 29413 / PCC 7937) (Anabaena variabilis).